The primary structure comprises 188 residues: Adenine phosphoribosyltransferase (188 aa).

This sequence belongs to the purine/pyrimidine phosphoribosyltransferase family. Homodimer.

It localises to the cytoplasm. The catalysed reaction is AMP + diphosphate = 5-phospho-alpha-D-ribose 1-diphosphate + adenine. It participates in purine metabolism; AMP biosynthesis via salvage pathway; AMP from adenine: step 1/1. Functionally, catalyzes a salvage reaction resulting in the formation of AMP, that is energically less costly than de novo synthesis. The chain is Adenine phosphoribosyltransferase from Paraburkholderia xenovorans (strain LB400).